Here is a 160-residue protein sequence, read N- to C-terminus: Iron-sulfur assembly protein IscA1 (160 aa).

It belongs to the HesB/IscA family. As to quaternary structure, tetramer.

It localises to the mitochondrion. The protein operates within cofactor biosynthesis; iron-sulfur cluster biosynthesis. Functionally, participates in iron-sulfur cluster formation (ISC) pathway for iron-sulfur (Fe-S) cluster biogenesis. Can bind iron and [4Fe-4S] clusters. May function as an iron chaperone. The chain is Iron-sulfur assembly protein IscA1 from Plasmodium falciparum (isolate 3D7).